Reading from the N-terminus, the 194-residue chain is Protein GrpE 2 (194 aa).

The span at 1–17 shows a compositional bias: basic and acidic residues; that stretch reads MNDIDKHKKETQTESKN. Residues 1–29 are disordered; the sequence is MNDIDKHKKETQTESKNDLNNTTITQNNV. The span at 18-29 shows a compositional bias: polar residues; the sequence is DLNNTTITQNNV.

The protein belongs to the GrpE family. Homodimer.

Its subcellular location is the cytoplasm. Participates actively in the response to hyperosmotic and heat shock by preventing the aggregation of stress-denatured proteins, in association with DnaK and GrpE. It is the nucleotide exchange factor for DnaK and may function as a thermosensor. Unfolded proteins bind initially to DnaJ; upon interaction with the DnaJ-bound protein, DnaK hydrolyzes its bound ATP, resulting in the formation of a stable complex. GrpE releases ADP from DnaK; ATP binding to DnaK triggers the release of the substrate protein, thus completing the reaction cycle. Several rounds of ATP-dependent interactions between DnaJ, DnaK and GrpE are required for fully efficient folding. This chain is Protein GrpE 2, found in Buchnera aphidicola subsp. Baizongia pistaciae (strain Bp).